A 358-amino-acid chain; its full sequence is Alanine racemase (358 aa).

K34 acts as the Proton acceptor; specific for D-alanine in catalysis. At K34 the chain carries N6-(pyridoxal phosphate)lysine. Residue R129 participates in substrate binding. Catalysis depends on Y254, which acts as the Proton acceptor; specific for L-alanine. M302 provides a ligand contact to substrate.

This sequence belongs to the alanine racemase family. Pyridoxal 5'-phosphate is required as a cofactor.

The catalysed reaction is L-alanine = D-alanine. Its pathway is amino-acid biosynthesis; D-alanine biosynthesis; D-alanine from L-alanine: step 1/1. Functionally, catalyzes the interconversion of L-alanine and D-alanine. May also act on other amino acids. This is Alanine racemase (alr) from Vibrio atlanticus (strain LGP32) (Vibrio splendidus (strain Mel32)).